Consider the following 728-residue polypeptide: Polyribonucleotide nucleotidyltransferase (728 aa).

Residues Asp488 and Asp494 each contribute to the Mg(2+) site. Residues Pro555–Ile614 enclose the KH domain. The S1 motif domain maps to Gly624–Lys692. Residues Ile702 to Gln728 form a disordered region. A compositionally biased stretch (low complexity) spans Ala710–Ala721.

The protein belongs to the polyribonucleotide nucleotidyltransferase family. The cofactor is Mg(2+).

The protein localises to the cytoplasm. It carries out the reaction RNA(n+1) + phosphate = RNA(n) + a ribonucleoside 5'-diphosphate. Its function is as follows. Involved in mRNA degradation. Catalyzes the phosphorolysis of single-stranded polyribonucleotides processively in the 3'- to 5'-direction. This chain is Polyribonucleotide nucleotidyltransferase, found in Cupriavidus pinatubonensis (strain JMP 134 / LMG 1197) (Cupriavidus necator (strain JMP 134)).